Consider the following 191-residue polypeptide: Holliday junction branch migration complex subunit RuvA (191 aa).

The interval 1-64 (MIGTLSGIIE…DNVPQLYGFT (64 aa)) is domain I. The interval 65–145 (DTEEQNCLKM…FNIMDKRGPS (81 aa)) is domain II. Residues 146-149 (VEDS) form a flexible linker region. The interval 149-191 (SDALSALLSLGYEKTRVLNALEKVGVSHNLSDTVRFALKELSK) is domain III.

It belongs to the RuvA family. As to quaternary structure, homotetramer. Forms an RuvA(8)-RuvB(12)-Holliday junction (HJ) complex. HJ DNA is sandwiched between 2 RuvA tetramers; dsDNA enters through RuvA and exits via RuvB. An RuvB hexamer assembles on each DNA strand where it exits the tetramer. Each RuvB hexamer is contacted by two RuvA subunits (via domain III) on 2 adjacent RuvB subunits; this complex drives branch migration. In the full resolvosome a probable DNA-RuvA(4)-RuvB(12)-RuvC(2) complex forms which resolves the HJ.

The protein resides in the cytoplasm. Its function is as follows. The RuvA-RuvB-RuvC complex processes Holliday junction (HJ) DNA during genetic recombination and DNA repair, while the RuvA-RuvB complex plays an important role in the rescue of blocked DNA replication forks via replication fork reversal (RFR). RuvA specifically binds to HJ cruciform DNA, conferring on it an open structure. The RuvB hexamer acts as an ATP-dependent pump, pulling dsDNA into and through the RuvAB complex. HJ branch migration allows RuvC to scan DNA until it finds its consensus sequence, where it cleaves and resolves the cruciform DNA. The chain is Holliday junction branch migration complex subunit RuvA from Anaplasma phagocytophilum (strain HZ).